Consider the following 308-residue polypeptide: Probable manganese-dependent inorganic pyrophosphatase (308 aa).

Positions 9, 13, 15, 75, 97, and 149 each coordinate Mn(2+).

Belongs to the PPase class C family. The cofactor is Mn(2+).

The protein resides in the cytoplasm. It catalyses the reaction diphosphate + H2O = 2 phosphate + H(+). The protein is Probable manganese-dependent inorganic pyrophosphatase of Listeria monocytogenes serotype 4a (strain HCC23).